The sequence spans 404 residues: MDALRAVAFYALFVFLWSLPCCQSAALISQKRSKGARSAFDGQRSHKFLKEILASSPGASRRDDFKDPVVPHDYMISIYRTYSAAEKLGLNASFFRSSKSANTITSFVDKGKDDLTLSPLRRQTYLFDVSTLSDKEELVGAELRIFRKSPGDVQPSPSGVYNLHLLSCRSERPLASRSIDLQDSRKAEWEVLDVWGIFKHRHQENQLCLQLKVTYGKSDTEIDLKQLGFHRHSRTQQERAILVVYTRSKKRENLFNEMKEKIKSRGDDDEEESALQFKARRRRRTALNNRHGKRHGKKSKSRCSKKALHVNFKELGWDDWIIAPLDYEAYHCEGVCDFPLRSHLEPTNHAIIQTLMNSMDPNSTPPSCCVPTKLSPISILYIDSGNNVVYKQYEDMVVEQCGCR.

A signal peptide spans 1–24 (MDALRAVAFYALFVFLWSLPCCQS). The propeptide occupies 25-284 (AALISQKRSK…LQFKARRRRR (260 aa)). Asn-91 carries N-linked (GlcNAc...) asparagine glycosylation. The segment at 263-304 (KSRGDDDEEESALQFKARRRRRTALNNRHGKRHGKKSKSRCS) is disordered. Residues 278 to 304 (KARRRRRTALNNRHGKRHGKKSKSRCS) are compositionally biased toward basic residues. Disulfide bonds link Cys-303–Cys-369, Cys-332–Cys-401, and Cys-336–Cys-403.

The protein belongs to the TGF-beta family. Homodimer; disulfide-linked. In terms of tissue distribution, first expressed in late gastrula stage embryos (9.5 hours post fertilization (hpf)) in anterior neuroectoderm corresponding to the future dorsal part of the brain. Shortly after tailbud formation (11 hpf), expression expands to the entire neural region and is subsequently expressed in derivatives of the lateral neural plate and migrating neural crest cells, with the future midbrain and hindbrain showing strong expression. Also expressed weakly and transiently in the posterior embryo from 11.5 hpf to 15 hpf in the lateral mesoderm, and in ectoderm above the neural keel. At 14 hpf, expressed along the entire length of the embryo and starting around the 16-somite stage, expressed in the dorsal quadrant of the retina, representing the distal tip of the eye anlage. At this stage, also expressed in the hatching gland and the hypochord. At 24 hpf, expressed in the roof plate outlining the fourth brain ventricle, in the posterior hypochord, the primitive gut endoderm, the ventral tail mesenchyme, the dorsal part of the neural tube and the dorsal fin. Weakly expressed in the dorsal part of the posterior spinal cord and in blood cell precursors.

The protein resides in the secreted. Growth factor that controls proliferation and cellular differentiation in the retina. Plays a key role in regulating apoptosis during retinal development. Establishes dorsal-ventral positional information in the retina and controls the formation of the retinotectal map. Functions maternally in dorsal/ventral patterning to induce the expression of the zygotic bmp2b and bmp4 genes and ventralize embryos. Zygotic expression does not appear to regulate axis specification, but instead functions to establish the integrity of the axial vessels during embryonic development. May be involved in maintaining the identity of cells of the dorsal-most neural tube and of at least a subset of neural crest cells. The sequence is that of Growth/differentiation factor 6-A (gdf6a) from Danio rerio (Zebrafish).